The sequence spans 80 residues: MKTGIKQVKLHVRKNDTVLVIAGNDKGKTGKVLRVFPQKNRVIVEGVNIRKRHVRPTQSHPQGAIIEREFPIHASNVKKS.

It belongs to the universal ribosomal protein uL24 family. As to quaternary structure, part of the 50S ribosomal subunit.

Its function is as follows. One of two assembly initiator proteins, it binds directly to the 5'-end of the 23S rRNA, where it nucleates assembly of the 50S subunit. One of the proteins that surrounds the polypeptide exit tunnel on the outside of the subunit. This Chlorobium phaeobacteroides (strain BS1) protein is Large ribosomal subunit protein uL24.